The sequence spans 725 residues: N-alpha-acetyltransferase 35, NatC auxiliary subunit (725 aa).

S187 is subject to Phosphoserine. The disordered stretch occupies residues 548 to 573 (ERIMEEQQKGRSSKKTKKKKKVRPLS). The span at 558 to 571 (RSSKKTKKKKKVRP) shows a compositional bias: basic residues.

Belongs to the MAK10 family. In terms of assembly, component of the N-terminal acetyltransferase C (NatC) complex, which is composed of NAA35, NAA38 and NAA30.

It is found in the cytoplasm. Functionally, auxillary component of the N-terminal acetyltransferase C (NatC) complex which catalyzes acetylation of N-terminal methionine residues. N-terminal acetylation protects proteins from ubiquitination and degradation by the N-end rule pathway. Involved in regulation of apoptosis and proliferation of smooth muscle cells. The protein is N-alpha-acetyltransferase 35, NatC auxiliary subunit (NAA35) of Macaca fascicularis (Crab-eating macaque).